The following is a 256-amino-acid chain: Thiazole synthase (256 aa).

Lysine 96 (schiff-base intermediate with DXP) is an active-site residue. 1-deoxy-D-xylulose 5-phosphate is bound by residues glycine 157, 183-184 (AG), and 205-206 (NT).

Belongs to the ThiG family. As to quaternary structure, homotetramer. Forms heterodimers with either ThiH or ThiS.

Its subcellular location is the cytoplasm. It carries out the reaction [ThiS sulfur-carrier protein]-C-terminal-Gly-aminoethanethioate + 2-iminoacetate + 1-deoxy-D-xylulose 5-phosphate = [ThiS sulfur-carrier protein]-C-terminal Gly-Gly + 2-[(2R,5Z)-2-carboxy-4-methylthiazol-5(2H)-ylidene]ethyl phosphate + 2 H2O + H(+). It participates in cofactor biosynthesis; thiamine diphosphate biosynthesis. Functionally, catalyzes the rearrangement of 1-deoxy-D-xylulose 5-phosphate (DXP) to produce the thiazole phosphate moiety of thiamine. Sulfur is provided by the thiocarboxylate moiety of the carrier protein ThiS. In vitro, sulfur can be provided by H(2)S. In Bacillus cereus (strain AH187), this protein is Thiazole synthase.